Consider the following 177-residue polypeptide: Large ribosomal subunit protein uL6 (177 aa).

The residue at position 44 (K44) is an N6-acetyllysine.

Belongs to the universal ribosomal protein uL6 family. In terms of assembly, part of the 50S ribosomal subunit.

In terms of biological role, this protein binds to the 23S rRNA, and is important in its secondary structure. It is located near the subunit interface in the base of the L7/L12 stalk, and near the tRNA binding site of the peptidyltransferase center. This chain is Large ribosomal subunit protein uL6, found in Escherichia coli O139:H28 (strain E24377A / ETEC).